The chain runs to 339 residues: Probable protein phosphatase 2C 28 (339 aa).

The PPM-type phosphatase domain occupies 87–334 (DHGYHLVKGQ…DDISCVVVSF (248 aa)). Mn(2+) contacts are provided by aspartate 124, glycine 125, aspartate 286, and aspartate 325.

Belongs to the PP2C family. The cofactor is Mg(2+). Mn(2+) serves as cofactor.

It catalyses the reaction O-phospho-L-seryl-[protein] + H2O = L-seryl-[protein] + phosphate. It carries out the reaction O-phospho-L-threonyl-[protein] + H2O = L-threonyl-[protein] + phosphate. This Arabidopsis thaliana (Mouse-ear cress) protein is Probable protein phosphatase 2C 28.